The primary structure comprises 211 residues: MTKGILGRKIGMTQVFAENGDLIPVTVIEATPNVVLQKKTIEKDGYEAIQLGFEDISEKRANKPQIGHAAKANTAPKRFIREIRGANIDEYEVGQEVKVDIFAEGDIVDVTGISKGKGFQGAIKRHGQSRGPMAHGSRYHRRPGSMGAIAPNRVFKSKELPGRMGGQRVTIQNLKIVKVDPERNLLLIKGNVPGPRKGLVIVKSAVKAKAK.

A disordered region spans residues 122 to 147; the sequence is AIKRHGQSRGPMAHGSRYHRRPGSMG.

It belongs to the universal ribosomal protein uL3 family. Part of the 50S ribosomal subunit. Forms a cluster with proteins L14 and L19.

Its function is as follows. One of the primary rRNA binding proteins, it binds directly near the 3'-end of the 23S rRNA, where it nucleates assembly of the 50S subunit. The chain is Large ribosomal subunit protein uL3 from Geobacillus sp. (strain WCH70).